The sequence spans 90 residues: Acyl-CoA-binding protein (90 aa).

The span at 1–16 shows a compositional bias: basic and acidic residues; that stretch reads MGLKEDFEEHAEKAKT. The interval 1 to 20 is disordered; sequence MGLKEDFEEHAEKAKTLPEN. One can recognise an ACB domain in the interval 3–88; the sequence is LKEDFEEHAE…VKQLLGEAAA (86 aa). An acyl-CoA contacts are provided by residues 30 to 34, lysine 56, and tyrosine 75; that span reads YGLYK.

This sequence belongs to the ACBP family.

Functionally, binds medium- and long-chain acyl-CoA esters with very high affinity and may function as an intracellular carrier of acyl-CoA esters. The polypeptide is Acyl-CoA-binding protein (Ricinus communis (Castor bean)).